An 841-amino-acid polypeptide reads, in one-letter code: Probable alpha-glucuronidase A (841 aa).

The signal sequence occupies residues 1-20; that stretch reads MRGLNLFQLILALLLSMVAA. N-linked (GlcNAc...) asparagine glycans are attached at residues N51, N76, N85, N149, N222, N279, N310, N343, N450, N465, N527, N576, N682, N723, and N732.

It belongs to the glycosyl hydrolase 67 family.

The protein resides in the secreted. The catalysed reaction is an alpha-D-glucuronoside + H2O = D-glucuronate + an alcohol. In terms of biological role, alpha-glucuronidase involved in the hydrolysis of xylan, a major structural heterogeneous polysaccharide found in plant biomass representing the second most abundant polysaccharide in the biosphere, after cellulose. Releases 4-O-methylglucuronic acid from xylan. The protein is Probable alpha-glucuronidase A (aguA) of Aspergillus niger (strain ATCC MYA-4892 / CBS 513.88 / FGSC A1513).